The sequence spans 336 residues: Aspartate--ammonia ligase (336 aa).

It belongs to the class-II aminoacyl-tRNA synthetase family. AsnA subfamily.

The protein resides in the cytoplasm. The catalysed reaction is L-aspartate + NH4(+) + ATP = L-asparagine + AMP + diphosphate + H(+). Its pathway is amino-acid biosynthesis; L-asparagine biosynthesis; L-asparagine from L-aspartate (ammonia route): step 1/1. This is Aspartate--ammonia ligase from Lactobacillus johnsonii (strain CNCM I-12250 / La1 / NCC 533).